Consider the following 451-residue polypeptide: Trigger factor (451 aa).

One can recognise a PPIase FKBP-type domain in the interval 162 to 243 (GDYAIIDITT…VQQSKERKLP (82 aa)).

It belongs to the FKBP-type PPIase family. Tig subfamily.

It is found in the cytoplasm. The enzyme catalyses [protein]-peptidylproline (omega=180) = [protein]-peptidylproline (omega=0). In terms of biological role, involved in protein export. Acts as a chaperone by maintaining the newly synthesized protein in an open conformation. Functions as a peptidyl-prolyl cis-trans isomerase. The chain is Trigger factor from Corynebacterium aurimucosum (strain ATCC 700975 / DSM 44827 / CIP 107346 / CN-1) (Corynebacterium nigricans).